The sequence spans 183 residues: Apo-citrate lyase phosphoribosyl-dephospho-CoA transferase (183 aa).

It belongs to the CitX family.

The catalysed reaction is apo-[citrate lyase ACP] + 2'-(5''-triphospho-alpha-D-ribosyl)-3'-dephospho-CoA = holo-[citrate lyase ACP] + diphosphate. Its function is as follows. Transfers 2-(5''-triphosphoribosyl)-3'-dephosphocoenzyme-A on a serine residue to the apo-acyl carrier protein (gamma chain) of the citrate lyase to yield holo-acyl carrier protein. The polypeptide is Apo-citrate lyase phosphoribosyl-dephospho-CoA transferase (Escherichia coli O45:K1 (strain S88 / ExPEC)).